Reading from the N-terminus, the 257-residue chain is (R)-2-haloacid dehalogenase (257 aa).

The protein belongs to the HAD-like hydrolase superfamily. S-2-haloalkanoic acid dehalogenase family.

The catalysed reaction is an (R)-2-haloacid + H2O = a (2S)-2-hydroxycarboxylate + a halide anion + H(+). Functionally, catalyzes the hydrolytic dehalogenation of small (R)-2-haloalkanoic acids to yield the corresponding (S)-2-hydroxyalkanoic acids. Acts on acids of short chain lengths, C(2) to C(4), with inversion of configuration at C-2. In Rhizobium sp. (strain NHG3), this protein is (R)-2-haloacid dehalogenase (dehI).